The following is an 874-amino-acid chain: Alanine--tRNA ligase (874 aa).

Residues His564, His568, Cys665, and His669 each contribute to the Zn(2+) site.

This sequence belongs to the class-II aminoacyl-tRNA synthetase family. It depends on Zn(2+) as a cofactor.

It is found in the cytoplasm. It carries out the reaction tRNA(Ala) + L-alanine + ATP = L-alanyl-tRNA(Ala) + AMP + diphosphate. In terms of biological role, catalyzes the attachment of alanine to tRNA(Ala) in a two-step reaction: alanine is first activated by ATP to form Ala-AMP and then transferred to the acceptor end of tRNA(Ala). Also edits incorrectly charged Ser-tRNA(Ala) and Gly-tRNA(Ala) via its editing domain. This is Alanine--tRNA ligase from Burkholderia mallei (strain ATCC 23344).